Here is a 1016-residue protein sequence, read N- to C-terminus: Nonsense-mediated mRNA decay factor SMG5 (1016 aa).

An N-acetylserine modification is found at S2. S2 and S423 each carry phosphoserine. 2 disordered regions span residues 408–561 (NPVP…PSEA) and 594–637 (PTTN…RSCR). Residues 449 to 466 (KSRKFSRLSCLRRRRHPP) show a composition bias toward basic residues. Over residues 594 to 603 (PTTNPHTSAS) the composition is skewed to polar residues. The span at 619 to 628 (ASEEGSESEG) shows a compositional bias: acidic residues. Positions 798–841 (QSEQESLLQQAQAQFRMAQEEARRNRLMRDMAQLRLQLEVSQLE) form a coiled coil. The PINc domain occupies 872–995 (RQLATSGRFI…GPMQAALQAA (124 aa)).

Interacts with TERT, PPP2CA and SMG1. Part of a complex that contains SMG1, SMG5, SMG7, PPP2CA, a short isoform of UPF3A (isoform UPF3AS, but not isoform UPF3AL) and phosphorylated UPF1. Not detected in complexes that contain unphosphorylated UPF1. In terms of tissue distribution, ubiquitous.

It localises to the cytoplasm. The protein localises to the nucleus. Plays a role in nonsense-mediated mRNA decay. Does not have RNase activity by itself. Promotes dephosphorylation of UPF1. Together with SMG7 is thought to provide a link to the mRNA degradation machinery involving exonucleolytic pathways, and to serve as an adapter for UPF1 to protein phosphatase 2A (PP2A), thereby triggering UPF1 dephosphorylation. Necessary for TERT activity. The protein is Nonsense-mediated mRNA decay factor SMG5 of Homo sapiens (Human).